A 380-amino-acid polypeptide reads, in one-letter code: Protein phosphatase methylesterase 1 (380 aa).

A disordered region spans residues 1 to 38 (MSALEKSMHLGRLPSRPPLPGSGGSQSGAKMRMGPGRK). Position 15 is a phosphoserine (Ser-15). Arg-16 carries the asymmetric dimethylarginine; alternate modification. An Omega-N-methylarginine; alternate modification is found at Arg-16. Position 42 is a phosphoserine (Ser-42). Catalysis depends on residues Ser-156 and Asp-181. The span at 255–265 (IEEEEEDEEGS) shows a compositional bias: acidic residues. Residues 255–280 (IEEEEEDEEGSESVNKRKKEDDMETK) are disordered. The span at 268–280 (VNKRKKEDDMETK) shows a compositional bias: basic and acidic residues. The active site involves His-349.

This sequence belongs to the AB hydrolase superfamily. In terms of assembly, binds PPP2CA and PPP2CB. Post-translationally, phosphorylated by SIK1 following increases in intracellular sodium, leading to dissociation from the protein phosphatase 2A (PP2A) complex and subsequent dephosphorylation of sodium/potassium-transporting ATPase ATP1A1.

The enzyme catalyses [phosphatase 2A protein]-C-terminal L-leucine methyl ester + H2O = [phosphatase 2A protein]-C-terminal L-leucine + methanol + H(+). In terms of biological role, demethylates proteins that have been reversibly carboxymethylated. Demethylates PPP2CB (in vitro) and PPP2CA. Binding to PPP2CA displaces the manganese ion and inactivates the enzyme. The polypeptide is Protein phosphatase methylesterase 1 (PPME1) (Bos taurus (Bovine)).